Reading from the N-terminus, the 169-residue chain is Large ribosomal subunit protein uL10 (169 aa).

Belongs to the universal ribosomal protein uL10 family. As to quaternary structure, part of the ribosomal stalk of the 50S ribosomal subunit. The N-terminus interacts with L11 and the large rRNA to form the base of the stalk. The C-terminus forms an elongated spine to which L12 dimers bind in a sequential fashion forming a multimeric L10(L12)X complex.

Functionally, forms part of the ribosomal stalk, playing a central role in the interaction of the ribosome with GTP-bound translation factors. The sequence is that of Large ribosomal subunit protein uL10 from Rickettsia peacockii (strain Rustic).